We begin with the raw amino-acid sequence, 392 residues long: Iripin-4 (392 aa).

Positions 1–16 (MRSLATFMSLLTICWG) are cleaved as a signal peptide. N-linked (GlcNAc...) asparagine glycosylation is found at Asn104, Asn130, and Asn265.

This sequence belongs to the serpin family. In terms of tissue distribution, female salivary gland.

It is found in the secreted. Serpin with unknown function. Weakly inhibits human granzyme B (GZMB). Acts as a substrate for porcine elastase. The polypeptide is Iripin-4 (Ixodes ricinus (Common tick)).